The following is a 490-amino-acid chain: Proline--tRNA ligase (490 aa).

The protein belongs to the class-II aminoacyl-tRNA synthetase family. ProS type 3 subfamily. In terms of assembly, homodimer.

Its subcellular location is the cytoplasm. It catalyses the reaction tRNA(Pro) + L-proline + ATP = L-prolyl-tRNA(Pro) + AMP + diphosphate. Functionally, catalyzes the attachment of proline to tRNA(Pro) in a two-step reaction: proline is first activated by ATP to form Pro-AMP and then transferred to the acceptor end of tRNA(Pro). This is Proline--tRNA ligase from Salinibacter ruber (strain DSM 13855 / M31).